A 207-amino-acid polypeptide reads, in one-letter code: Thymidylate kinase (207 aa).

7–14 lines the ATP pocket; sequence GCEGSGKS.

Belongs to the thymidylate kinase family.

It catalyses the reaction dTMP + ATP = dTDP + ADP. Phosphorylation of dTMP to form dTDP in both de novo and salvage pathways of dTTP synthesis. This Chlamydia felis (strain Fe/C-56) (Chlamydophila felis) protein is Thymidylate kinase.